Reading from the N-terminus, the 236-residue chain is 5'-methylthioadenosine/S-adenosylhomocysteine nucleosidase (236 aa).

Glutamate 12 (proton acceptor) is an active-site residue. Substrate contacts are provided by residues glycine 78, isoleucine 153, and 174–175 (ME). Aspartate 198 acts as the Proton donor in catalysis.

The protein belongs to the PNP/UDP phosphorylase family. MtnN subfamily.

It carries out the reaction S-adenosyl-L-homocysteine + H2O = S-(5-deoxy-D-ribos-5-yl)-L-homocysteine + adenine. It catalyses the reaction S-methyl-5'-thioadenosine + H2O = 5-(methylsulfanyl)-D-ribose + adenine. The catalysed reaction is 5'-deoxyadenosine + H2O = 5-deoxy-D-ribose + adenine. It functions in the pathway amino-acid biosynthesis; L-methionine biosynthesis via salvage pathway; S-methyl-5-thio-alpha-D-ribose 1-phosphate from S-methyl-5'-thioadenosine (hydrolase route): step 1/2. In terms of biological role, catalyzes the irreversible cleavage of the glycosidic bond in both 5'-methylthioadenosine (MTA) and S-adenosylhomocysteine (SAH/AdoHcy) to adenine and the corresponding thioribose, 5'-methylthioribose and S-ribosylhomocysteine, respectively. Also cleaves 5'-deoxyadenosine, a toxic by-product of radical S-adenosylmethionine (SAM) enzymes, into 5-deoxyribose and adenine. The protein is 5'-methylthioadenosine/S-adenosylhomocysteine nucleosidase of Shewanella oneidensis (strain ATCC 700550 / JCM 31522 / CIP 106686 / LMG 19005 / NCIMB 14063 / MR-1).